Reading from the N-terminus, the 597-residue chain is Serine/arginine repetitive matrix protein 3 (597 aa).

Positions 1–31 (MSSTVNNGAASMQSTPDAANGFPQPSSSSGT) are enriched in polar residues. The segment at 1–47 (MSSTVNNGAASMQSTPDAANGFPQPSSSSGTWPRAEEELRAAEPGLV) is disordered. Residues 55–98 (LDHERKRRVELKCMELQEMMEEQGYSEEEIRQKVGTFRQMLMEK) form the CWF21 domain. Residues 99-109 (EGVLTREDRPG) show a composition bias toward basic and acidic residues. A disordered region spans residues 99 to 597 (EGVLTREDRP…GPAPLPPPAA (499 aa)). Composition is skewed to basic residues over residues 149 to 158 (RGHRGYRTKH), 168 to 186 (PKKKKKKKGGHRRSRKKRR), 199 to 211 (LRKKKKSVKKHRR), and 219 to 243 (RRKRRHRSRSSKCKRKEKNKEKKRP). Composition is skewed to low complexity over residues 257–278 (SGSSHSPSLSSHYSDSRSPSRL) and 291–313 (SQRSSGSRSPSPSGGSGWGSPQR). Gly residues-rich tracts occupy residues 315–328 (GGSGQRSGAHGGRP) and 374–383 (GRGGRAAGGA). The segment covering 384-412 (GRRRRRRRRRRRSRSSASAPRRRGRRRPR) has biased composition (basic residues). Composition is skewed to low complexity over residues 417–433 (RGSSRSLSRARSSSDSG), 466–476 (RPASTSPSPGA), and 488–507 (SSRSPGPHPRSWSSSRSPSK). Basic and acidic residues predominate over residues 530-549 (LSRDKDGEGRARHSEAEATR). The span at 550-565 (ARRRSRSYSPIRKRRR) shows a compositional bias: basic residues.

The protein belongs to the CWC21 family. In terms of tissue distribution, expressed in breast cancer cell lines.

May play a role in regulating breast cancer cell invasiveness. May be involved in RYBP-mediated breast cancer progression. The sequence is that of Serine/arginine repetitive matrix protein 3 (SRRM3) from Homo sapiens (Human).